The primary structure comprises 191 residues: Thymidylate kinase (191 aa).

7–14 (GIDGVGKS) contributes to the ATP binding site.

The protein belongs to the thymidylate kinase family.

The catalysed reaction is dTMP + ATP = dTDP + ADP. Phosphorylation of dTMP to form dTDP in both de novo and salvage pathways of dTTP synthesis. The chain is Thymidylate kinase from Helicobacter acinonychis (strain Sheeba).